Here is a 457-residue protein sequence, read N- to C-terminus: MTKLWGGRFTESASAQAEAFGASISFDQKLAAVDLQGSLAHAQMLYEQGILEKTEWEQIEAGLKQLQTTLEQHVYTTVDEDIHMNLERLLTEQIGPVAGKLHTARSRNDQVATDLHLWMEQHVLELLSSLRNLQSVITEQAEQHVETVMPGYTHLQRAQPISLAHHLLAYFWMFERDADRLTDNLKRIRMSPLGAGALAGTTFPIDRFKSAELLGFEQVYPNSLDAVSDRDFVIEYLGIASTVMMHLSRFCEEIIIWASQEFSFIELSDAFSTGSSMMPQKKNPDFAELIRGKTGRVYGNLMGFLTTMKALPLAYNKDMQEDKEGVFDTADTVLQSVQIFTGMIESATFKTEALKKATMQDFSNATELADYLVTKGIPFREAHEIVGKAVLHCVQSGCFLKDLTLSTYQTFHPVIAEDVYPLLDPVQAVARRGSYGGTGFTAVRDQLALAKKQLEKL.

This sequence belongs to the lyase 1 family. Argininosuccinate lyase subfamily.

It localises to the cytoplasm. The catalysed reaction is 2-(N(omega)-L-arginino)succinate = fumarate + L-arginine. Its pathway is amino-acid biosynthesis; L-arginine biosynthesis; L-arginine from L-ornithine and carbamoyl phosphate: step 3/3. This chain is Argininosuccinate lyase, found in Exiguobacterium sibiricum (strain DSM 17290 / CCUG 55495 / CIP 109462 / JCM 13490 / 255-15).